Reading from the N-terminus, the 146-residue chain is Acidic phospholipase A2 S14-72F (146 aa).

Positions M1–A19 are cleaved as a signal peptide. Positions A20–L27 are excised as a propeptide. 7 disulfide bridges follow: C38–C98, C54–C145, C56–C72, C71–C126, C78–C119, C87–C112, and C105–C117. Positions 55, 57, and 59 each coordinate Ca(2+). Residue H75 is part of the active site. Residue D76 participates in Ca(2+) binding. D120 is an active-site residue.

It belongs to the phospholipase A2 family. Group I subfamily. D49 sub-subfamily. Requires Ca(2+) as cofactor. In terms of tissue distribution, expressed by the venom gland.

It is found in the secreted. It carries out the reaction a 1,2-diacyl-sn-glycero-3-phosphocholine + H2O = a 1-acyl-sn-glycero-3-phosphocholine + a fatty acid + H(+). In terms of biological role, snake venom phospholipase A2 (PLA2) that inhibits collagen-induced platelet aggregation. PLA2 catalyzes the calcium-dependent hydrolysis of the 2-acyl groups in 3-sn-phosphoglycerides. The protein is Acidic phospholipase A2 S14-72F of Austrelaps superbus (Lowland copperhead snake).